We begin with the raw amino-acid sequence, 75 residues long: UPF0235 protein Mvan_2846 (75 aa).

This sequence belongs to the UPF0235 family.

The polypeptide is UPF0235 protein Mvan_2846 (Mycolicibacterium vanbaalenii (strain DSM 7251 / JCM 13017 / BCRC 16820 / KCTC 9966 / NRRL B-24157 / PYR-1) (Mycobacterium vanbaalenii)).